The following is a 309-amino-acid chain: tRNA pseudouridine synthase B (309 aa).

The active-site Nucleophile is aspartate 45.

This sequence belongs to the pseudouridine synthase TruB family. Type 1 subfamily.

It carries out the reaction uridine(55) in tRNA = pseudouridine(55) in tRNA. Responsible for synthesis of pseudouridine from uracil-55 in the psi GC loop of transfer RNAs. In Oleidesulfovibrio alaskensis (strain ATCC BAA-1058 / DSM 17464 / G20) (Desulfovibrio alaskensis), this protein is tRNA pseudouridine synthase B.